We begin with the raw amino-acid sequence, 155 residues long: UPF0251 protein Paes_1249 (155 aa).

Belongs to the UPF0251 family.

This Prosthecochloris aestuarii (strain DSM 271 / SK 413) protein is UPF0251 protein Paes_1249.